A 434-amino-acid chain; its full sequence is Phosphomethylpyrimidine synthase 2 (434 aa).

Residues methionine 94, tyrosine 123, histidine 162, 184 to 186, 225 to 228, and glutamate 264 each bind substrate; these read SRG and NAMR. Histidine 268 lines the Zn(2+) pocket. Residue tyrosine 291 participates in substrate binding. Histidine 332 contributes to the Zn(2+) binding site. 3 residues coordinate [4Fe-4S] cluster: cysteine 408, cysteine 411, and cysteine 415.

The protein belongs to the ThiC family. Requires [4Fe-4S] cluster as cofactor.

The catalysed reaction is 5-amino-1-(5-phospho-beta-D-ribosyl)imidazole + S-adenosyl-L-methionine = 4-amino-2-methyl-5-(phosphooxymethyl)pyrimidine + CO + 5'-deoxyadenosine + formate + L-methionine + 3 H(+). The protein operates within cofactor biosynthesis; thiamine diphosphate biosynthesis. Its function is as follows. Catalyzes the synthesis of the hydroxymethylpyrimidine phosphate (HMP-P) moiety of thiamine from aminoimidazole ribotide (AIR) in a radical S-adenosyl-L-methionine (SAM)-dependent reaction. The polypeptide is Phosphomethylpyrimidine synthase 2 (Methanosphaera stadtmanae (strain ATCC 43021 / DSM 3091 / JCM 11832 / MCB-3)).